The chain runs to 24 residues: uncharacterized protein (24 aa).

Over 1–3 (MKK) the chain is Cytoplasmic. The chain crosses the membrane as a helical span at residues 4-24 (TTIIMMGVAIIVVLGTELGWW).

The protein resides in the cell inner membrane. This is an uncharacterized protein from Escherichia coli (strain K12).